Reading from the N-terminus, the 64-residue chain is SPbeta prophage-derived uncharacterized protein YonP (64 aa).

This is SPbeta prophage-derived uncharacterized protein YonP (yonP) from Bacillus subtilis (strain 168).